A 342-amino-acid polypeptide reads, in one-letter code: Isopentenyl-diphosphate delta-isomerase (342 aa).

12–13 (RK) provides a ligand contact to substrate. FMN is bound by residues 71–73 (AMT), Ser-101, and Asn-129. Residue 101–103 (SQR) participates in substrate binding. Gln-163 lines the substrate pocket. Glu-164 is a binding site for Mg(2+). Residues Lys-195, Thr-225, 272–274 (GIR), and 293–294 (AR) each bind FMN.

The protein belongs to the IPP isomerase type 2 family. As to quaternary structure, homooctamer. Dimer of tetramers. FMN is required as a cofactor. Requires NADPH as cofactor. Mg(2+) serves as cofactor.

Its subcellular location is the cytoplasm. It catalyses the reaction isopentenyl diphosphate = dimethylallyl diphosphate. Its function is as follows. Involved in the biosynthesis of isoprenoids. Catalyzes the 1,3-allylic rearrangement of the homoallylic substrate isopentenyl (IPP) to its allylic isomer, dimethylallyl diphosphate (DMAPP). In Mycolicibacterium gilvum (strain PYR-GCK) (Mycobacterium gilvum (strain PYR-GCK)), this protein is Isopentenyl-diphosphate delta-isomerase.